Here is a 214-residue protein sequence, read N- to C-terminus: Adenylate kinase (214 aa).

ATP is bound at residue 10–15 (GAGKGT). Positions 30–59 (STGDMLRAAVKAGTPLGLEAKKVMDAGQLV) are NMP. AMP contacts are provided by residues Thr31, Arg36, 57–59 (QLV), 85–88 (GFPR), and Gln92. The segment at 122–159 (GRRVHPGSGRVYHIVFNQPKVEGKDDVTGEDLAIRPDD) is LID. Residues Arg123 and 132-133 (VY) each bind ATP. Arg156 and Arg167 together coordinate AMP. Gln200 contacts ATP.

It belongs to the adenylate kinase family. Monomer.

The protein localises to the cytoplasm. It catalyses the reaction AMP + ATP = 2 ADP. It participates in purine metabolism; AMP biosynthesis via salvage pathway; AMP from ADP: step 1/1. In terms of biological role, catalyzes the reversible transfer of the terminal phosphate group between ATP and AMP. Plays an important role in cellular energy homeostasis and in adenine nucleotide metabolism. The polypeptide is Adenylate kinase (Shewanella halifaxensis (strain HAW-EB4)).